Reading from the N-terminus, the 449-residue chain is Asparagine--tRNA ligase (449 aa).

This sequence belongs to the class-II aminoacyl-tRNA synthetase family. As to quaternary structure, homodimer.

The protein localises to the cytoplasm. It carries out the reaction tRNA(Asn) + L-asparagine + ATP = L-asparaginyl-tRNA(Asn) + AMP + diphosphate + H(+). The polypeptide is Asparagine--tRNA ligase (Desulfotalea psychrophila (strain LSv54 / DSM 12343)).